We begin with the raw amino-acid sequence, 571 residues long: UvrABC system protein C (571 aa).

In terms of domain architecture, GIY-YIG spans 15–93; it reads TSPGVYLWKD…IDRYNPEFNI (79 aa). The UVR domain maps to 184 to 219; the sequence is NNYINELTNKMHQAANNMQFELALFLRDGLTYLKKL.

This sequence belongs to the UvrC family. As to quaternary structure, interacts with UvrB in an incision complex.

It is found in the cytoplasm. In terms of biological role, the UvrABC repair system catalyzes the recognition and processing of DNA lesions. UvrC both incises the 5' and 3' sides of the lesion. The N-terminal half is responsible for the 3' incision and the C-terminal half is responsible for the 5' incision. The chain is UvrABC system protein C from Mycoplasmopsis bovis (strain ATCC 25523 / DSM 22781 / NCTC 10131 / PG45) (Mycoplasma bovis).